We begin with the raw amino-acid sequence, 65 residues long: Cold shock-like protein CspC (65 aa).

The 60-residue stretch at Gly3–Val62 folds into the CSD domain.

As to quaternary structure, homodimer.

It localises to the cytoplasm. The chain is Cold shock-like protein CspC (cspC) from Bacillus cereus.